The primary structure comprises 229 residues: PHO85 cyclin-5 (229 aa).

The span at 1 to 24 (MDGNHRFTPDSKEFNTVVKSKESS) shows a compositional bias: basic and acidic residues. The segment at 1 to 46 (MDGNHRFTPDSKEFNTVVKSKESSTGRNPYQTPPLEHNGTHHQTNY) is disordered.

The protein belongs to the cyclin family. PCL1,2 subfamily. In terms of assembly, forms a cyclin-CDK complex with PHO85.

Cyclin partner of the cyclin-dependent kinase (CDK) PHO85. Positively controls degradation of transcription factor GCN4 under favorable growth conditions. The PCL5-PHO85 cyclin-CDK holoenzyme phosphorylates GCN4, which is required for its degradation by the E3 ubiquitin ligase complex SCF(Cdc4). Amino acid starvation reduces PCL5-PHO85-associated GCN4 kinase activity and leads to stabilization of GCN4. The sequence is that of PHO85 cyclin-5 (PCL5) from Saccharomyces cerevisiae (strain ATCC 204508 / S288c) (Baker's yeast).